A 432-amino-acid polypeptide reads, in one-letter code: MTQMLAARAGEITTAMKRVAEKEGLSPEFIRQGVAEGSIVIPANINHRNLDPVGFGKGLKTKVNANIGTSTSFTDIEKELEKLKVVLEAGADAVMDLSTGGEIDQGRRRIIEESTIAVGTVPIYQSFLENRNKRGSMIAMTADDLFEVVERHCSDGVDFITVHCGITLEVLERIKKQSRITDIVSRGGSFLTGWMLHHGKENPLYEQFDRLLDICLKYDVTLSLGDGLRPGCLADATDRAQIQELIILGELVDKAREKGVQAMVEGPGHVPLDQIRANIEVQKTLCKGAPFYVLGPLVTDVAPGYDHITAAIGGTVAAAAGADFLCYVTPAEHLGLPTLEDVREGIMASRIAAHAADIVKGIPGALEWDKKMARARKALDWDEQIKLAIDPQRAAKIRQERNPDGHEACTMCGDFCAMKIVAQYLGKEPESC.

Residues asparagine 66, methionine 95, tyrosine 124, histidine 163, 185–187 (SRG), 226–229 (DGLR), and glutamate 265 contribute to the substrate site. Histidine 269 is a binding site for Zn(2+). Tyrosine 292 lines the substrate pocket. Histidine 333 contacts Zn(2+). The [4Fe-4S] cluster site is built by cysteine 409, cysteine 412, and cysteine 416.

The protein belongs to the ThiC family. [4Fe-4S] cluster is required as a cofactor.

It carries out the reaction 5-amino-1-(5-phospho-beta-D-ribosyl)imidazole + S-adenosyl-L-methionine = 4-amino-2-methyl-5-(phosphooxymethyl)pyrimidine + CO + 5'-deoxyadenosine + formate + L-methionine + 3 H(+). The protein operates within cofactor biosynthesis; thiamine diphosphate biosynthesis. Functionally, catalyzes the synthesis of the hydroxymethylpyrimidine phosphate (HMP-P) moiety of thiamine from aminoimidazole ribotide (AIR) in a radical S-adenosyl-L-methionine (SAM)-dependent reaction. This Desulforamulus reducens (strain ATCC BAA-1160 / DSM 100696 / MI-1) (Desulfotomaculum reducens) protein is Phosphomethylpyrimidine synthase.